A 200-amino-acid chain; its full sequence is Large ribosomal subunit protein uL4 (200 aa).

The segment at 45 to 64 is disordered; it reads QKTRAEVSGGGIKPWRQKGT.

The protein belongs to the universal ribosomal protein uL4 family. As to quaternary structure, part of the 50S ribosomal subunit.

One of the primary rRNA binding proteins, this protein initially binds near the 5'-end of the 23S rRNA. It is important during the early stages of 50S assembly. It makes multiple contacts with different domains of the 23S rRNA in the assembled 50S subunit and ribosome. In terms of biological role, forms part of the polypeptide exit tunnel. In Psychrobacter cryohalolentis (strain ATCC BAA-1226 / DSM 17306 / VKM B-2378 / K5), this protein is Large ribosomal subunit protein uL4.